The sequence spans 678 residues: Serine/threonine-protein kinase mph1 (678 aa).

Disordered stretches follow at residues 39 to 93 and 114 to 209; these read KNDT…NSAL and LPST…SNSV. 2 stretches are compositionally biased toward polar residues: residues 41 to 66 and 114 to 125; these read DTFS…SSGA and LPSTNASHSEVS. The 292-residue stretch at 316-607 folds into the Protein kinase domain; sequence FIKLGVVGKG…LVHPFLNPLP (292 aa). ATP contacts are provided by residues 322–330 and Lys345; that span reads VGKGGSSMV. Residue Asp442 is the Proton acceptor of the active site.

It belongs to the protein kinase superfamily. Ser/Thr protein kinase family.

The catalysed reaction is L-seryl-[protein] + ATP = O-phospho-L-seryl-[protein] + ADP + H(+). It carries out the reaction L-threonyl-[protein] + ATP = O-phospho-L-threonyl-[protein] + ADP + H(+). It catalyses the reaction L-tyrosyl-[protein] + ATP = O-phospho-L-tyrosyl-[protein] + ADP + H(+). Involved in mitotic spindle assembly checkpoint signaling, a process that delays anaphase until chromosomes are bioriented on the spindle, and in the repair of incorrect mitotic kinetochore-spindle microtubule attachments. Phosphorylates spc7/knl1 on MELT motifs; phosphorylation is required for recruitment of the BUB1-BUB3 complex to kinetochores. The polypeptide is Serine/threonine-protein kinase mph1 (Schizosaccharomyces pombe (strain 972 / ATCC 24843) (Fission yeast)).